The primary structure comprises 191 residues: Transcription factor FapR (191 aa).

Belongs to the FapR family.

Functionally, transcriptional factor involved in regulation of membrane lipid biosynthesis by repressing genes involved in fatty acid and phospholipid metabolism. The protein is Transcription factor FapR of Oceanobacillus iheyensis (strain DSM 14371 / CIP 107618 / JCM 11309 / KCTC 3954 / HTE831).